Consider the following 465-residue polypeptide: Hepatocyte nuclear factor 6 (465 aa).

Disordered regions lie at residues 15–84 and 119–141; these read GVSH…GPLH and SDKF…HQRL. Residues 123 to 140 are compositionally biased toward basic residues; that stretch reads PHHHHHHHHHHHPHHHQR. The CUT DNA-binding region spans 283–369; it reads GSNSGQMEEI…QRMSALRLAA (87 aa). The segment at residues 385-444 is a DNA-binding region (homeobox); it reads PKKPRLVFTDVQRRTLHAIFKENKRPSKELQITISQQLGLELSTVSNFFMNARRRSLDKW. The segment at 442–465 is disordered; that stretch reads DKWQDEGSSNSGNSSSSSSTCTKA. A compositionally biased stretch (low complexity) spans 448-465; it reads GSSNSGNSSSSSSTCTKA.

It belongs to the CUT homeobox family. Binds DNA as a monomer. In terms of tissue distribution, expressed in liver, brain, spleen and testis.

The protein localises to the nucleus. Functionally, transcriptional activator. Binds the consensus sequence 5'-DHWATTGAYTWWD-3' on a variety of gene promoters such as those of HNF3B and TTR. Important for liver genes transcription. The affinity of HNF-6-alpha and HNF-6-beta for DNA differs depending on the target sequence. This Rattus norvegicus (Rat) protein is Hepatocyte nuclear factor 6 (Onecut1).